The primary structure comprises 158 residues: Large ribosomal subunit protein uL16 (158 aa).

It belongs to the universal ribosomal protein uL16 family. As to quaternary structure, part of the 50S ribosomal subunit.

Binds 23S rRNA and is also seen to make contacts with the A and possibly P site tRNAs. The sequence is that of Large ribosomal subunit protein uL16 from Synechococcus sp. (strain CC9902).